The sequence spans 70 residues: Envelope small membrane protein (70 aa).

G2 carries N-myristoyl glycine; by host lipidation. The endoplasmic reticulum retention signal stretch occupies residues 2–15 (GSLWSKISQLFVDA). At 2–25 (GSLWSKISQLFVDAFTEFLVSVVD) the chain is on the virion surface side. A helical membrane pass occupies residues 26–46 (IAIFLAILFGFTVAGWLLVFL). Over 47 to 70 (LRVVCSALLRSRSAIHSPELSKVL) the chain is Intravirion.

This sequence belongs to the arteriviridae E protein family. As to quaternary structure, homooligomer. Associates with itself into higher-order structures, including dimers, trimers and tetramers. Associates with the GP2a-GP3-GP4 complex. In terms of processing, myristoylated. Not glycosylated.

Its subcellular location is the virion membrane. It localises to the host endoplasmic reticulum membrane. The protein resides in the host Golgi apparatus membrane. It is found in the secreted. In terms of biological role, minor envelope protein. May function as a viroporin in the virion envelope that facilitates uncoating of the virus in order to release the genomic RNA into the cytoplasm for subsequent replication. This chain is Envelope small membrane protein (GP2b), found in Sus scrofa (Pig).